An 84-amino-acid polypeptide reads, in one-letter code: U8-theraphotoxin-Hhn1c 3 (84 aa).

An N-terminal signal peptide occupies residues 1–21 (MKVALIVCLVWVMAMMELVSC). 5 cysteine pairs are disulfide-bonded: Cys-23–Cys-35, Cys-29–Cys-44, Cys-34–Cys-67, Cys-54–Cys-75, and Cys-69–Cys-81.

This sequence belongs to the AVIT (prokineticin) family. In terms of tissue distribution, expressed by the venom gland.

It is found in the secreted. This Cyriopagopus hainanus (Chinese bird spider) protein is U8-theraphotoxin-Hhn1c 3.